A 154-amino-acid chain; its full sequence is Large ribosomal subunit protein uL13 (154 aa).

Positions 131–154 (DHKHEAQQPEVVDFKSMNSKNTRG) are disordered.

This sequence belongs to the universal ribosomal protein uL13 family. In terms of assembly, part of the 50S ribosomal subunit.

Its function is as follows. This protein is one of the early assembly proteins of the 50S ribosomal subunit, although it is not seen to bind rRNA by itself. It is important during the early stages of 50S assembly. The sequence is that of Large ribosomal subunit protein uL13 from Maricaulis maris (strain MCS10) (Caulobacter maris).